The following is a 100-amino-acid chain: Urease subunit gamma (100 aa).

Belongs to the urease gamma subunit family. Heterotrimer of UreA (gamma), UreB (beta) and UreC (alpha) subunits. Three heterotrimers associate to form the active enzyme.

It is found in the cytoplasm. The catalysed reaction is urea + 2 H2O + H(+) = hydrogencarbonate + 2 NH4(+). The protein operates within nitrogen metabolism; urea degradation; CO(2) and NH(3) from urea (urease route): step 1/1. The sequence is that of Urease subunit gamma from Cyanothece sp. (strain PCC 7425 / ATCC 29141).